The sequence spans 503 residues: ATP synthase subunit alpha (503 aa).

Residue 170–177 coordinates ATP; the sequence is GDRQTGKT.

This sequence belongs to the ATPase alpha/beta chains family. F-type ATPases have 2 components, CF(1) - the catalytic core - and CF(0) - the membrane proton channel. CF(1) has five subunits: alpha(3), beta(3), gamma(1), delta(1), epsilon(1). CF(0) has three main subunits: a(1), b(2) and c(9-12). The alpha and beta chains form an alternating ring which encloses part of the gamma chain. CF(1) is attached to CF(0) by a central stalk formed by the gamma and epsilon chains, while a peripheral stalk is formed by the delta and b chains.

The protein localises to the cell inner membrane. It carries out the reaction ATP + H2O + 4 H(+)(in) = ADP + phosphate + 5 H(+)(out). In terms of biological role, produces ATP from ADP in the presence of a proton gradient across the membrane. The alpha chain is a regulatory subunit. The polypeptide is ATP synthase subunit alpha (Geobacter sulfurreducens (strain ATCC 51573 / DSM 12127 / PCA)).